The chain runs to 338 residues: Ketol-acid reductoisomerase (NADP(+)) (338 aa).

Residues 1-181 (MHVYYDKDCD…GGGRTGIIET (181 aa)) enclose the KARI N-terminal Rossmann domain. Residues 24-27 (YGSQ), R47, S50, T52, and 82-85 (DEFQ) contribute to the NADP(+) site. H107 is an active-site residue. Residue G133 participates in NADP(+) binding. Residues 182–327 (TFKDETETDL…AKLRAMMPWI (146 aa)) form the KARI C-terminal knotted domain. Positions 190, 194, 226, and 230 each coordinate Mg(2+). S251 provides a ligand contact to substrate.

Belongs to the ketol-acid reductoisomerase family. Requires Mg(2+) as cofactor.

It catalyses the reaction (2R)-2,3-dihydroxy-3-methylbutanoate + NADP(+) = (2S)-2-acetolactate + NADPH + H(+). It carries out the reaction (2R,3R)-2,3-dihydroxy-3-methylpentanoate + NADP(+) = (S)-2-ethyl-2-hydroxy-3-oxobutanoate + NADPH + H(+). Its pathway is amino-acid biosynthesis; L-isoleucine biosynthesis; L-isoleucine from 2-oxobutanoate: step 2/4. It functions in the pathway amino-acid biosynthesis; L-valine biosynthesis; L-valine from pyruvate: step 2/4. Involved in the biosynthesis of branched-chain amino acids (BCAA). Catalyzes an alkyl-migration followed by a ketol-acid reduction of (S)-2-acetolactate (S2AL) to yield (R)-2,3-dihydroxy-isovalerate. In the isomerase reaction, S2AL is rearranged via a Mg-dependent methyl migration to produce 3-hydroxy-3-methyl-2-ketobutyrate (HMKB). In the reductase reaction, this 2-ketoacid undergoes a metal-dependent reduction by NADPH to yield (R)-2,3-dihydroxy-isovalerate. The sequence is that of Ketol-acid reductoisomerase (NADP(+)) from Cellvibrio japonicus (strain Ueda107) (Pseudomonas fluorescens subsp. cellulosa).